The following is a 178-amino-acid chain: Mediator of RNA polymerase II transcription subunit 28 (178 aa).

The interval 1-44 (MAAPLGGMFSGQPPGPPQAPPGLPGQASLLQAAPGAPRPSSSTL) is disordered. The span at 13-23 (PPGPPQAPPGL) shows a compositional bias: pro residues. Positions 109 to 145 (QVIKEDVSELRNELQRKDALVQKHLTKLRHWQQVLED) form a coiled coil.

It belongs to the Mediator complex subunit 28 family. In terms of assembly, component of the Mediator complex, which is composed of MED1, MED4, MED6, MED7, MED8, MED9, MED10, MED11, MED12, MED13, MED13L, MED14, MED15, MED16, MED17, MED18, MED19, MED20, MED21, MED22, MED23, MED24, MED25, MED26, MED27, MED29, MED30, MED31, CCNC, CDK8 and CDC2L6/CDK11. The MED12, MED13, CCNC and CDK8 subunits form a distinct module termed the CDK8 module. Mediator containing the CDK8 module is less active than Mediator lacking this module in supporting transcriptional activation. Individual preparations of the Mediator complex lacking one or more distinct subunits have been variously termed ARC, CRSP, DRIP, PC2, SMCC and TRAP. Forms a ternary complex with NF2/merlin and GRB2. Binds to actin. In terms of tissue distribution, widely expressed. Highly expressed in vascular tissues such as placenta, testis and liver.

The protein resides in the nucleus. The protein localises to the cytoplasm. It is found in the membrane. Component of the Mediator complex, a coactivator involved in the regulated transcription of nearly all RNA polymerase II-dependent genes. Mediator functions as a bridge to convey information from gene-specific regulatory proteins to the basal RNA polymerase II transcription machinery. Mediator is recruited to promoters by direct interactions with regulatory proteins and serves as a scaffold for the assembly of a functional preinitiation complex with RNA polymerase II and the general transcription factors. May be part of a complex containing NF2/merlin that participates in cellular signaling to the actin cytoskeleton downstream of tyrosine kinase signaling pathways. The sequence is that of Mediator of RNA polymerase II transcription subunit 28 (MED28) from Homo sapiens (Human).